The following is a 167-amino-acid chain: Protein FAM163B (167 aa).

A helical membrane pass occupies residues 6 to 26 (VVITGGILATVILLCIIAVLC). Ser-40 is subject to Phosphoserine.

The protein belongs to the FAM163 family.

It is found in the membrane. The sequence is that of Protein FAM163B (Fam163b) from Mus musculus (Mouse).